Consider the following 317-residue polypeptide: D-alanine--D-alanine ligase (317 aa).

Residues 104 to 303 (KRVWLQHGLP…YAELCVAILA (200 aa)) form the ATP-grasp domain. An ATP-binding site is contributed by 130 to 185 (PDRLGLPLILKPPHEGSTVGITKVAACADMEQAYAAASHFDEVVLAEQFVRGRELT). The Mg(2+) site is built by aspartate 257, glutamate 270, and asparagine 272.

Belongs to the D-alanine--D-alanine ligase family. Requires Mg(2+) as cofactor. The cofactor is Mn(2+).

It localises to the cytoplasm. The enzyme catalyses 2 D-alanine + ATP = D-alanyl-D-alanine + ADP + phosphate + H(+). The protein operates within cell wall biogenesis; peptidoglycan biosynthesis. Functionally, cell wall formation. The chain is D-alanine--D-alanine ligase from Bordetella avium (strain 197N).